Here is a 394-residue protein sequence, read N- to C-terminus: LL-diaminopimelate aminotransferase (394 aa).

Positions 14 and 41 each coordinate substrate. Residues Tyr71, 104–105 (AK), Tyr128, Asn174, Tyr205, and 233–235 (SFS) each bind pyridoxal 5'-phosphate. Lys105, Tyr128, and Asn174 together coordinate substrate. The residue at position 236 (Lys236) is an N6-(pyridoxal phosphate)lysine. Pyridoxal 5'-phosphate-binding residues include Arg244 and Asn275. Substrate-binding residues include Asn275 and Arg369.

Belongs to the class-I pyridoxal-phosphate-dependent aminotransferase family. LL-diaminopimelate aminotransferase subfamily. Homodimer. The cofactor is pyridoxal 5'-phosphate.

The enzyme catalyses (2S,6S)-2,6-diaminopimelate + 2-oxoglutarate = (S)-2,3,4,5-tetrahydrodipicolinate + L-glutamate + H2O + H(+). It functions in the pathway amino-acid biosynthesis; L-lysine biosynthesis via DAP pathway; LL-2,6-diaminopimelate from (S)-tetrahydrodipicolinate (aminotransferase route): step 1/1. Involved in the synthesis of meso-diaminopimelate (m-DAP or DL-DAP), required for both lysine and peptidoglycan biosynthesis. Catalyzes the direct conversion of tetrahydrodipicolinate to LL-diaminopimelate. In Chlamydia trachomatis serovar L2b (strain UCH-1/proctitis), this protein is LL-diaminopimelate aminotransferase.